The primary structure comprises 416 residues: 3-oxoacyl-[acyl-carrier-protein] synthase 1 (416 aa).

Positions 11-415 (FPSVVVTAVT…GHNVALAFGR (405 aa)) constitute a Ketosynthase family 3 (KS3) domain. Active-site for beta-ketoacyl synthase activity residues include cysteine 171, histidine 311, and histidine 345. Substrate contacts are provided by histidine 311 and histidine 345.

The protein belongs to the thiolase-like superfamily. Beta-ketoacyl-ACP synthases family.

Its subcellular location is the cytoplasm. It carries out the reaction an ultra-long-chain mono-unsaturated fatty acyl-[ACP] + malonyl-[ACP] + H(+) = a 3-oxo-ultra-long-chain mono-unsaturated fatty acyl-[ACP] + holo-[ACP] + CO2. It functions in the pathway lipid metabolism; mycolic acid biosynthesis. Its function is as follows. Part of the mycobacterial fatty acid elongation system FAS-II, which is involved in mycolic acid biosynthesis. Catalyzes the elongation of long chain acyl-ACP substrates by the addition of two carbons from malonyl-ACP to an acyl acceptor. Involved in the initial extension of the mycolate chain and forms monounsaturated fatty acids that averaged 40 carbons in length. In Mycobacterium tuberculosis (strain ATCC 35801 / TMC 107 / Erdman), this protein is 3-oxoacyl-[acyl-carrier-protein] synthase 1 (kasA).